We begin with the raw amino-acid sequence, 521 residues long: Maturase K (521 aa).

The protein belongs to the intron maturase 2 family. MatK subfamily.

It is found in the plastid. The protein resides in the chloroplast. Usually encoded in the trnK tRNA gene intron. Probably assists in splicing its own and other chloroplast group II introns. The sequence is that of Maturase K from Anthericum liliago (St-Bernard's lily).